A 353-amino-acid polypeptide reads, in one-letter code: 2-oxoglutarate-Fe(II) type oxidoreductase ppzD (353 aa).

The Fe2OG dioxygenase domain occupies 181–292; sequence NTSELRLNHY…RYSVAYFGKP (112 aa). The Fe cation site is built by H208, D210, and H268. Position 283 (R283) interacts with 2-oxoglutarate.

The protein belongs to the iron/ascorbate-dependent oxidoreductase family. Fe(2+) is required as a cofactor.

It carries out the reaction L-proline + 2-oxoglutarate + O2 = trans-4-hydroxy-L-proline + succinate + CO2. The catalysed reaction is L-proline + 2-oxoglutarate + O2 = trans-3-hydroxy-L-proline + succinate + CO2. The enzyme catalyses D-proline + 2-oxoglutarate + O2 = cis-4-hydroxy-D-proline + succinate + CO2. It participates in secondary metabolite biosynthesis. In terms of biological role, 2-oxoglutarate-Fe(II) type oxidoreductase; part of the gene cluster that mediates the biosynthesis of pyrrolopyrazines, secondary metabolites showing insecticidal activity. Within the pathway, ppzD converts L-proline into trans-4-hydroxy-L-proline as a major product, yielding a key precursor for peramine biosynthesis. PpzD is also able to convert L-proline into trans-3-hydroxy-L-proline. The single multifunctional NRPS ppzA is sufficient to produce peramine via condensation of 1-pyrroline-5-carboxylate and arginine, N-methylation of the alpha-amino group of arginine and reduction of the thioester and the cyclization to form an iminium ion resulting in release from the peptide synthetase. Deprotonation of this intermediate and oxidation of the pyrroline ring would give rise to peramine. In Epichloe species that produce only peramine, the peramine synthetase gene is not localized in a gene cluster, in contrast to Metarhizium species that contain additional pyrrolopyrazine biosynthesis genes. The 2-oxoglutarate-Fe(II) type oxidoreductase ppzC hydroxylates peramine to yield the newly identified compound 8-hydroxyperamine whereas ppzD converts L-proline into trans-4-hydroxy-L-proline, a precursor of peramine biosynthesis. In Metarhizium rileyi (strain RCEF 4871) (Nomuraea rileyi), this protein is 2-oxoglutarate-Fe(II) type oxidoreductase ppzD.